The primary structure comprises 189 residues: Peptidyl-tRNA hydrolase (189 aa).

Tyr-16 lines the tRNA pocket. The Proton acceptor role is filled by His-21. Positions 67, 69, and 115 each coordinate tRNA.

It belongs to the PTH family. In terms of assembly, monomer.

It is found in the cytoplasm. It carries out the reaction an N-acyl-L-alpha-aminoacyl-tRNA + H2O = an N-acyl-L-amino acid + a tRNA + H(+). Its function is as follows. Hydrolyzes ribosome-free peptidyl-tRNAs (with 1 or more amino acids incorporated), which drop off the ribosome during protein synthesis, or as a result of ribosome stalling. Functionally, catalyzes the release of premature peptidyl moieties from peptidyl-tRNA molecules trapped in stalled 50S ribosomal subunits, and thus maintains levels of free tRNAs and 50S ribosomes. This Legionella pneumophila (strain Paris) protein is Peptidyl-tRNA hydrolase.